The primary structure comprises 469 residues: 3-isopropylmalate dehydratase large subunit (469 aa).

The [4Fe-4S] cluster site is built by cysteine 349, cysteine 410, and cysteine 413.

The protein belongs to the aconitase/IPM isomerase family. LeuC type 1 subfamily. Heterodimer of LeuC and LeuD. The cofactor is [4Fe-4S] cluster.

It catalyses the reaction (2R,3S)-3-isopropylmalate = (2S)-2-isopropylmalate. It participates in amino-acid biosynthesis; L-leucine biosynthesis; L-leucine from 3-methyl-2-oxobutanoate: step 2/4. Functionally, catalyzes the isomerization between 2-isopropylmalate and 3-isopropylmalate, via the formation of 2-isopropylmaleate. The protein is 3-isopropylmalate dehydratase large subunit of Neisseria meningitidis serogroup C (strain 053442).